A 650-amino-acid chain; its full sequence is Threonine--tRNA ligase (650 aa).

Positions methionine 1–methionine 61 constitute a TGS domain. Residues aspartate 242 to proline 540 form a catalytic region. 3 residues coordinate Zn(2+): cysteine 336, histidine 387, and histidine 517.

Belongs to the class-II aminoacyl-tRNA synthetase family. In terms of assembly, homodimer. Zn(2+) is required as a cofactor.

It is found in the cytoplasm. It catalyses the reaction tRNA(Thr) + L-threonine + ATP = L-threonyl-tRNA(Thr) + AMP + diphosphate + H(+). Functionally, catalyzes the attachment of threonine to tRNA(Thr) in a two-step reaction: L-threonine is first activated by ATP to form Thr-AMP and then transferred to the acceptor end of tRNA(Thr). Also edits incorrectly charged L-seryl-tRNA(Thr). This chain is Threonine--tRNA ligase, found in Streptococcus suis (strain 98HAH33).